The sequence spans 492 residues: N-succinylglutamate 5-semialdehyde dehydrogenase (492 aa).

Residue 220–225 (GSASTG) coordinates NAD(+). Catalysis depends on residues Glu243 and Cys277.

The protein belongs to the aldehyde dehydrogenase family. AstD subfamily.

The catalysed reaction is N-succinyl-L-glutamate 5-semialdehyde + NAD(+) + H2O = N-succinyl-L-glutamate + NADH + 2 H(+). Its pathway is amino-acid degradation; L-arginine degradation via AST pathway; L-glutamate and succinate from L-arginine: step 4/5. Its function is as follows. Catalyzes the NAD-dependent reduction of succinylglutamate semialdehyde into succinylglutamate. In Salmonella paratyphi A (strain AKU_12601), this protein is N-succinylglutamate 5-semialdehyde dehydrogenase.